We begin with the raw amino-acid sequence, 393 residues long: Thyrotropin-releasing hormone receptor (393 aa).

Over 1 to 28 (MENDTVSEMNQTELQPQAAVALEYQVVT) the chain is Extracellular. N-linked (GlcNAc...) asparagine glycosylation is found at Asn-3 and Asn-10. The chain crosses the membrane as a helical span at residues 29–51 (ILLVVIICGLGIVGNIMVVLVVM). Topologically, residues 52–61 (RTKHMRTPTN) are cytoplasmic. Residues 62 to 83 (CYLVSLAVADLMVLVAAGLPNI) traverse the membrane as a helical segment. Residues 84–99 (TDSIYGSWVYGYVGCL) are Extracellular-facing. Cysteines 98 and 179 form a disulfide. A helical membrane pass occupies residues 100–121 (CITYLQYLGINASSCSITAFTI). Residues 122-144 (ERYIAICHPIKAQFLCTFSRAKK) lie on the Cytoplasmic side of the membrane. The chain crosses the membrane as a helical span at residues 145 to 168 (IIIFVWAFTSIYCMLWFFLLDLNI). The Extracellular segment spans residues 169–193 (STYKNAVVVSCGYKISRNYYSPIYL). Residues 194–215 (MDFGVFYVVPMILATVLYGFIA) form a helical membrane-spanning segment. Over 216-266 (RILFLNPIPSDPKENSKMWKNDSIHQNKNLNLNATNRCFNSTVSSRKQVTK) the chain is Cytoplasmic. A helical transmembrane segment spans residues 267-288 (MLAVVVILFALLWMPYRTLVVV). Over 289–296 (NSFLSSPF) the chain is Extracellular. Residues 297-319 (QENWFLLFCRICIYLNSAINPVI) traverse the membrane as a helical segment. Residues 320 to 393 (YNLMSQKFRA…FDDTCLASEN (74 aa)) are Cytoplasmic-facing.

The protein belongs to the G-protein coupled receptor 1 family.

The protein localises to the cell membrane. Receptor for thyrotropin-releasing hormone (TRH). Upon ligand binding, this G-protein-coupled receptor triggers activation of the phosphatidylinositol (IP3)-calcium-protein kinase C (PKC) pathway. The protein is Thyrotropin-releasing hormone receptor (Trhr) of Mus musculus (Mouse).